A 300-amino-acid polypeptide reads, in one-letter code: N-acetylmuramic acid 6-phosphate etherase (300 aa).

In terms of domain architecture, SIS spans 57–220 (VAAALRAGGR…STGAMIRIGK (164 aa)). Glu-85 serves as the catalytic Proton donor. The active site involves Glu-116.

The protein belongs to the GCKR-like family. MurNAc-6-P etherase subfamily. Homodimer.

The enzyme catalyses N-acetyl-D-muramate 6-phosphate + H2O = N-acetyl-D-glucosamine 6-phosphate + (R)-lactate. The protein operates within amino-sugar metabolism; 1,6-anhydro-N-acetylmuramate degradation. It participates in amino-sugar metabolism; N-acetylmuramate degradation. Its pathway is cell wall biogenesis; peptidoglycan recycling. Functionally, specifically catalyzes the cleavage of the D-lactyl ether substituent of MurNAc 6-phosphate, producing GlcNAc 6-phosphate and D-lactate. Together with AnmK, is also required for the utilization of anhydro-N-acetylmuramic acid (anhMurNAc) either imported from the medium or derived from its own cell wall murein, and thus plays a role in cell wall recycling. This chain is N-acetylmuramic acid 6-phosphate etherase, found in Klebsiella aerogenes (Enterobacter aerogenes).